Consider the following 370-residue polypeptide: 3-dehydroquinate synthase (370 aa).

NAD(+)-binding positions include 108–112 (GVIGD), 132–133 (TT), Lys145, and Lys154. Glu187, His249, and His267 together coordinate Zn(2+).

The protein belongs to the sugar phosphate cyclases superfamily. Dehydroquinate synthase family. It depends on Co(2+) as a cofactor. The cofactor is Zn(2+). NAD(+) is required as a cofactor.

The protein localises to the cytoplasm. The catalysed reaction is 7-phospho-2-dehydro-3-deoxy-D-arabino-heptonate = 3-dehydroquinate + phosphate. Its pathway is metabolic intermediate biosynthesis; chorismate biosynthesis; chorismate from D-erythrose 4-phosphate and phosphoenolpyruvate: step 2/7. Functionally, catalyzes the conversion of 3-deoxy-D-arabino-heptulosonate 7-phosphate (DAHP) to dehydroquinate (DHQ). This is 3-dehydroquinate synthase from Cereibacter sphaeroides (strain KD131 / KCTC 12085) (Rhodobacter sphaeroides).